A 1516-amino-acid chain; its full sequence is Receptor-type tyrosine-protein phosphatase S (1516 aa).

The signal sequence occupies residues 1-28 (MRILPSPGMPALLSLVSLLSVLLMGCVA). The Extracellular portion of the chain corresponds to 29-854 (ESPPVFIKKP…PQPIIDGEEG (826 aa)). 3 consecutive Ig-like C2-type domains span residues 32–122 (PVFI…AKLT), 134–223 (PNID…ANLY), and 235–317 (PRFS…AQIT). Cystine bridges form between Cys-53-Cys-106 and Cys-155-Cys-206. The tract at residues 67 to 71 (KKGKK) is important for binding to glycosaminoglycan chains. N-linked (GlcNAc...) asparagine glycans are attached at residues Asn-253 and Asn-298. Cys-256 and Cys-301 are oxidised to a cystine. Fibronectin type-III domains are found at residues 324-414 (APGT…TGEQ), 419-513 (APRN…TQQG), 517-606 (QPMN…TLQS), and 608-692 (LPKN…TAAN). A helical membrane pass occupies residues 855 to 875 (LIWVIGPVLAVVFIICIVIAI). Residues 876–1516 (LLYKNKRKDS…YLGSFDHYAT (641 aa)) lie on the Cytoplasmic side of the membrane. 2 consecutive Tyrosine-protein phosphatase domains span residues 961–1216 (LSQE…LLEA) and 1248–1507 (MELE…ALEY). Catalysis depends on phosphocysteine intermediate residues Cys-1157 and Cys-1448.

This sequence belongs to the protein-tyrosine phosphatase family. Receptor class 2A subfamily. As to quaternary structure, homodimer. Binding to large heparan sulfate proteoglycan structures promotes oligomerization. Binding to chondroitin sulfate proteoglycan does not lead to oligomerization. Interacts (via Ig-like domains) with NTRK1 and NTRK3, but does not form detectable complexes with NTRK2. Interacts (via extracellular domain) with the heparan sulfate proteoglycans AGRN and COL18A1. In terms of processing, a cleavage occurs, separating the extracellular domain from the transmembrane segment. This process called 'ectodomain shedding' is thought to be involved in receptor desensitization, signal transduction and/or membrane localization. As to expression, detected in embryonic brain, dorsal root ganglion and spinal cord. Detected in embryonic retina (at protein level). Detected in embryonic brain, spinal cord, dorsal root ganglion, trigeminal ganglion, ganglia associated with the precardinal vein and vagus nerve, the inner and outer nuclear layer of the retina, limb, breast muscle, heart, gut and lung.

Its subcellular location is the cell membrane. It is found in the cell projection. The protein resides in the axon. The protein localises to the perikaryon. It localises to the cytoplasmic vesicle. Its subcellular location is the secretory vesicle. It is found in the synaptic vesicle membrane. The protein resides in the synapse. The protein localises to the synaptosome. It localises to the postsynaptic density. Its subcellular location is the neuron projection. It is found in the growth cone. The enzyme catalyses O-phospho-L-tyrosyl-[protein] + H2O = L-tyrosyl-[protein] + phosphate. Its function is as follows. Cell surface receptor that binds to glycosaminoglycans, including chondroitin sulfate proteoglycans and heparan sulfate proteoglycans. Binding to chondroitin sulfate and heparan sulfate proteoglycans has opposite effects on PTPRS oligomerization and regulation of neurite outgrowth. Contributes to the inhibition of neurite and axonal outgrowth by chondroitin sulfate proteoglycans, also after nerve transection. Plays a role in stimulating neurite outgrowth in response to the heparan sulfate proteoglycan GPC2. Required for normal brain development, especially for normal development of the pituitary gland and the olfactory bulb. Functions as tyrosine phosphatase. Mediates dephosphorylation of NTRK1, NTRK2 and NTRK3. Plays a role in down-regulation of signaling cascades that lead to the activation of Akt and MAP kinases. Down-regulates TLR9-mediated activation of NF-kappa-B, as well as production of TNF, interferon alpha and interferon beta. In Gallus gallus (Chicken), this protein is Receptor-type tyrosine-protein phosphatase S (PTPRS).